Consider the following 385-residue polypeptide: Isocitrate dehydrogenase [NAD] subunit beta, mitochondrial (385 aa).

Residues 1-34 (MAALSGVRWLTRALVSAGNPGAWRGLSTSAAAHA) constitute a mitochondrion transit peptide. Lys199 carries the post-translational modification N6-acetyllysine.

This sequence belongs to the isocitrate and isopropylmalate dehydrogenases family. Heterooligomer of subunits alpha (IDH3A), beta (IDH3B), and gamma (IDH3G) in the apparent ratio of 2:1:1. The heterodimer containing one IDH3A and one IDH3B subunit and the heterodimer containing one IDH3A and one IDH3G subunit assemble into a heterotetramer (which contains two subunits of IDH3A, one of IDH3B and one of IDH3G) and further into the heterooctamer.

It localises to the mitochondrion. The heterotetramer and the heterodimer composed of IDH3A and IDH3G subunits can be allosterically activated by citrate (CIT) or/and ADP, and the two activators can act independently or synergistically. The heterodimer composed of IDH3A and IDH3B subunits cannot be allosterically regulated and the allosteric regulation of the heterotetramer is through the IDH3G subunit and not the IDH3B subunit. The IDH3G subunit contains the allosteric site which consists of a CIT-binding site and an ADP-binding site, and the binding of CIT and ADP causes conformational changes at the allosteric site which are transmitted to the active site in the catalytic subunit (IDH3A) through a cascade of conformational changes at the heterodimer interface, leading to stabilization of the isocitrate-binding at the active site and thus activation of the enzyme. ATP can activate the heterotetramer and the heterodimer composed of IDH3A and IDH3G subunits at low concentrations but inhibits their activities at high concentrations, whereas ATP exhibits only inhibitory effect on the heterodimer composed of IDH3A and IDH3B subunits. In terms of biological role, plays a structural role to facilitate the assembly and ensure the full activity of the enzyme catalyzing the decarboxylation of isocitrate (ICT) into alpha-ketoglutarate. The heterodimer composed of the alpha (IDH3A) and beta (IDH3B) subunits and the heterodimer composed of the alpha (IDH3A) and gamma (IDH3G) subunits, have considerable basal activity but the full activity of the heterotetramer (containing two subunits of IDH3A, one of IDH3B and one of IDH3G) requires the assembly and cooperative function of both heterodimers. The protein is Isocitrate dehydrogenase [NAD] subunit beta, mitochondrial (IDH3B) of Homo sapiens (Human).